Reading from the N-terminus, the 343-residue chain is Apolipoprotein L6 (343 aa).

The span at 1–10 (MDNQAERESE) shows a compositional bias: basic and acidic residues. Residues 1–24 (MDNQAERESEAGVGLQRDEDDAPL) are disordered.

The protein belongs to the apolipoprotein L family. Widely expressed; highly expressed in the uterus, fetal brain and spinal cord, also detected in heart, liver, lung, colon, spleen, thymus, prostate, placenta, adrenal gland, salivary and mammary gland.

The protein localises to the cytoplasm. In terms of biological role, may affect the movement of lipids in the cytoplasm or allow the binding of lipids to organelles. The chain is Apolipoprotein L6 (APOL6) from Homo sapiens (Human).